The primary structure comprises 307 residues: Glutaminase (307 aa).

Substrate-binding residues include Ser-67, Asn-117, Glu-161, Asn-168, Tyr-192, Tyr-243, and Val-261.

This sequence belongs to the glutaminase family. In terms of assembly, homotetramer.

It carries out the reaction L-glutamine + H2O = L-glutamate + NH4(+). The protein is Glutaminase of Streptomyces coelicolor (strain ATCC BAA-471 / A3(2) / M145).